The chain runs to 82 residues: UPF0213 protein MW0443 (82 aa).

The GIY-YIG domain maps to 2–77 (DSHFVYIVKC…KTYTRQKKLR (76 aa)).

The protein belongs to the UPF0213 family.

This chain is UPF0213 protein MW0443, found in Staphylococcus aureus (strain MW2).